Here is a 285-residue protein sequence, read N- to C-terminus: 4-diphosphocytidyl-2-C-methyl-D-erythritol kinase (285 aa).

Lys10 is a catalytic residue. 92 to 102 lines the ATP pocket; it reads PFGAGLGGGSS. Residue Asp134 is part of the active site.

The protein belongs to the GHMP kinase family. IspE subfamily.

The enzyme catalyses 4-CDP-2-C-methyl-D-erythritol + ATP = 4-CDP-2-C-methyl-D-erythritol 2-phosphate + ADP + H(+). The protein operates within isoprenoid biosynthesis; isopentenyl diphosphate biosynthesis via DXP pathway; isopentenyl diphosphate from 1-deoxy-D-xylulose 5-phosphate: step 3/6. Functionally, catalyzes the phosphorylation of the position 2 hydroxy group of 4-diphosphocytidyl-2C-methyl-D-erythritol. This is 4-diphosphocytidyl-2-C-methyl-D-erythritol kinase from Chloroherpeton thalassium (strain ATCC 35110 / GB-78).